Here is a 311-residue protein sequence, read N- to C-terminus: Large ribosomal subunit protein uL18 (311 aa).

The protein belongs to the universal ribosomal protein uL18 family. In terms of assembly, component of the large ribosomal subunit (LSU).

It is found in the cytoplasm. The protein resides in the nucleus. Functionally, component of the ribosome, a large ribonucleoprotein complex responsible for the synthesis of proteins in the cell. The small ribosomal subunit (SSU) binds messenger RNAs (mRNAs) and translates the encoded message by selecting cognate aminoacyl-transfer RNA (tRNA) molecules. The large subunit (LSU) contains the ribosomal catalytic site termed the peptidyl transferase center (PTC), which catalyzes the formation of peptide bonds, thereby polymerizing the amino acids delivered by tRNAs into a polypeptide chain. The nascent polypeptides leave the ribosome through a tunnel in the LSU and interact with protein factors that function in enzymatic processing, targeting, and the membrane insertion of nascent chains at the exit of the ribosomal tunnel. The chain is Large ribosomal subunit protein uL18 (RPL5) from Eimeria tenella (Coccidian parasite).